Here is a 388-residue protein sequence, read N- to C-terminus: MIKIGVIADDFTGATDIASFLVENGLPTVQINGVPTGKMPEAIDALVISLKTRSCPVVEATQQSLAALSWLQQQGCKQIYFKYCSTFDSTAKGNIGPVTDALMDALDTPFTVFSPALPVNGRTVYQGYLFVMNQLLAESGMRHHPVNPMTDSYLPRLVEAQSTGRCGVVSAHVFEQGVDAVRQELARLQQEGYRYAVLDALTEHHLEIQGEALRDAPLVTGGSGLAIGLARQWAQENGNQARKAGRPLAGRGVVLSGSCSQMTNRQVAHYRQIAPAREVDVARCLSIETLAAYAHELAEWVLGQESVLAPLVFATASTDALAAIQQQYGAQKASQAVETLFSQLAARLAAEGVTRFIVAGGETSGVVTQSLGIKGFHIGPTISPACRG.

Residues S258 and 360-363 contribute to the ATP site; that span reads GGET.

It belongs to the four-carbon acid sugar kinase family.

The catalysed reaction is 3-dehydro-L-erythronate + ATP = 3-dehydro-4-O-phospho-L-erythronate + ADP + H(+). It carries out the reaction 3-dehydro-D-erythronate + ATP = 3-dehydro-4-O-phospho-D-erythronate + ADP + H(+). Catalyzes the ATP-dependent phosphorylation of 3-oxo-tetronate to 3-oxo-tetronate 4-phosphate. This is 3-oxo-tetronate kinase from Escherichia coli (strain K12).